The sequence spans 314 residues: MDQRLICSNAIKALKNLEENSIDLIITDPPYNLGKDYGTTDDNLNFNKYLEFSHEWLEECYRVLKPHGTIYIFMGMKYISYIYKILEQDLGMYFNSWITWYYTQGIGKTRGYSPRHDDILMFTKHPKKFTFNLDRIRVPQKYYRSVNNMRGANPSNVWEFSHVHYCNKNRKPHPTQKPEALYERMILASSNEGDIVLDPFVGSGTLNFVCKHLNRSGIGIDINKEYIEMAKERLDSEFNGFDSIDERMKRCPNDLSDPVIRKQYIINHINWFLKNHENAREEFLNEVKTKYYKKMTQEEKRLLDKENNLSFDFS.

The protein belongs to the N(4)/N(6)-methyltransferase family.

The enzyme catalyses a 2'-deoxyadenosine in DNA + S-adenosyl-L-methionine = an N(6)-methyl-2'-deoxyadenosine in DNA + S-adenosyl-L-homocysteine + H(+). A beta subtype methylase that recognizes the double-stranded sequence 5'-GTTAAC-3', methylates A-5 on both strands, and protects the DNA from cleavage by the HpaI endonuclease. The sequence is that of Type II methyltransferase M.HpaI (hpaIM) from Haemophilus parainfluenzae.